The following is a 312-amino-acid chain: Probable deoxyhypusine synthase (312 aa).

Residue K285 is the Nucleophile of the active site.

Belongs to the deoxyhypusine synthase family. NAD(+) is required as a cofactor.

The enzyme catalyses [eIF5A protein]-L-lysine + spermidine = [eIF5A protein]-deoxyhypusine + propane-1,3-diamine. It participates in protein modification; eIF5A hypusination. In terms of biological role, catalyzes the NAD-dependent oxidative cleavage of spermidine and the subsequent transfer of the butylamine moiety of spermidine to the epsilon-amino group of a specific lysine residue of the eIF-5A precursor protein to form the intermediate deoxyhypusine residue. The sequence is that of Probable deoxyhypusine synthase (dys) from Saccharolobus solfataricus (strain ATCC 35092 / DSM 1617 / JCM 11322 / P2) (Sulfolobus solfataricus).